The following is a 118-amino-acid chain: Large ribosomal subunit protein bL19 (118 aa).

It belongs to the bacterial ribosomal protein bL19 family.

This protein is located at the 30S-50S ribosomal subunit interface and may play a role in the structure and function of the aminoacyl-tRNA binding site. This Campylobacter curvus (strain 525.92) protein is Large ribosomal subunit protein bL19.